The sequence spans 735 residues: Disintegrin and metalloproteinase domain-containing protein 2 (735 aa).

Residues 1 to 18 (MWLILLLLSGLSELGGLS) form the signal peptide. Positions 19-180 (QSQTEGTREK…YKIRSIKPQR (162 aa)) are excised as a propeptide. Topologically, residues 19–686 (QSQTEGTREK…ASAYRSKSPR (668 aa)) are extracellular. Residues asparagine 128, asparagine 226, and asparagine 279 are each glycosylated (N-linked (GlcNAc...) asparagine). Residues 184–381 (HYLEIHIVVE…QSSHCLQNQP (198 aa)) form the Peptidase M12B domain. 4 disulfides stabilise this stretch: cysteine 293/cysteine 376, cysteine 335/cysteine 360, cysteine 337/cysteine 342, and cysteine 449/cysteine 469. N-linked (GlcNAc...) asparagine glycans are attached at residues asparagine 359, asparagine 463, asparagine 489, asparagine 569, and asparagine 585. The Disintegrin domain occupies 389-476 (MAVCGNGEVE…EVCEDFFVQN (88 aa)). Residues 615–648 (LGYDCNLEKCNHHGVCNNKKNCHCDPTYLPPDCK) enclose the EGF-like domain. 3 disulfide bridges follow: cysteine 619/cysteine 630, cysteine 624/cysteine 636, and cysteine 638/cysteine 647. Residues 687 to 707 (WPFFLIIPFYVVILVLIGMLV) traverse the membrane as a helical segment. Residues 708–735 (KVYSQRMKWRMDDFSSEEQFESESESKD) are Cytoplasmic-facing. Phosphoserine is present on serine 729.

As to quaternary structure, heterodimer with ADAM1/fertilin subunit alpha. Post-translationally, the signal and the metalloprotease domain are cleaved during the epididymal maturation of the spermatozoa. As to expression, expressed in the testis and testicular sperm (at protein level).

It localises to the membrane. Its function is as follows. Sperm surface membrane protein that may be involved in sperm-egg plasma membrane adhesion and fusion during fertilization. Could have a direct role in sperm-zona binding or migration of sperm from the uterus into the oviduct. Interactions with egg membrane could be mediated via binding between its disintegrin-like domain to one or more integrins receptors on the egg. This is a non catalytic metalloprotease-like protein. In Mus musculus (Mouse), this protein is Disintegrin and metalloproteinase domain-containing protein 2.